Consider the following 493-residue polypeptide: Phenmedipham hydrolase (493 aa).

The Acyl-ester intermediate role is filled by Ser188. Residues Glu307 and His402 each act as charge relay system in the active site.

The protein belongs to the type-B carboxylesterase/lipase family. In terms of assembly, monomer.

Functionally, may degrade the phenylcarbamate herbicides phenmedipham and desmedipham cometabolically by hydrolyzing their central carbamate linkages. Conveys resistance to the herbicide phenmedipham. This Pseudarthrobacter oxydans (Arthrobacter oxydans) protein is Phenmedipham hydrolase (pcd).